The chain runs to 269 residues: Neurotrophic factor BDNF precursor form (269 aa).

An N-terminal signal peptide occupies residues 1–18 (MTILFLTMVISYFSCMRA). Positions 19-150 (APLRDAPGMR…AANMSMRVRR (132 aa)) are excised as a propeptide. 2 disordered regions span residues 39 to 61 (AATA…REEL) and 82 to 104 (AAHV…VATA). N-linked (GlcNAc...) asparagine glycosylation is present at Asn-143. 3 disulfide bridges follow: Cys-163/Cys-230, Cys-208/Cys-259, and Cys-218/Cys-261.

It belongs to the NGF-beta family.

Its function is as follows. BDNF promotes the survival of neuronal populations that are all located either in the central nervous system or directly connected to it. The protein is Neurotrophic factor BDNF precursor form (bdnf) of Xiphophorus maculatus (Southern platyfish).